Consider the following 516-residue polypeptide: uncharacterized protein (516 aa).

An N-terminal signal peptide occupies residues 1–17; the sequence is MSVWVALALLGMCVSCT. Disordered regions lie at residues 29–197 and 296–426; these read KEPP…EVPR and RTVS…RDHL. Residues 71–85 show a composition bias toward basic and acidic residues; that stretch reads RVPESSQEREQKPES. The segment covering 122-144 has biased composition (pro residues); that stretch reads VAPPAPPAPTAPRPHRPSPPPVS. Over residues 145–155 the composition is skewed to low complexity; that stretch reads PSASKPKQRAV. Basic and acidic residues predominate over residues 351 to 367; sequence KAQHGTPRPDEKKDREP. The segment covering 394–406 has biased composition (low complexity); the sequence is SPASQPSAPSAAP. Over residues 415 to 426 the composition is skewed to basic and acidic residues; the sequence is AHKEGQEKRDHL.

This is an uncharacterized protein from Treponema pallidum (strain Nichols).